The sequence spans 508 residues: Zinc finger CCCH-type with G patch domain-containing protein (508 aa).

A disordered region spans residues 67–86; sequence QQESSHHDSGTPETDTKTSV. Positions 69 to 86 are enriched in basic and acidic residues; sequence ESSHHDSGTPETDTKTSV. Residues 161-188 form a C3H1-type zinc finger; that stretch reads RSMVPCPYFLEGKCKFAGAECRFSHGYL. The disordered stretch occupies residues 253–282; it reads IYPLGPEEVESDSESDSQSDTGDSSSSKAA. The span at 259 to 269 shows a compositional bias: acidic residues; the sequence is EEVESDSESDS. The span at 270–279 shows a compositional bias: low complexity; sequence QSDTGDSSSS. Positions 310–356 constitute a G-patch domain; the sequence is TKGIGSKLMAKMGYIFGKGLGKDGEGRVEPIEVVVLPQGKSLDKCAE. Positions 404 to 426 are disordered; it reads SLHDLRVSHPGAKPDIRKTRKSA.

The protein resides in the nucleus. In terms of biological role, transcription repressor. This chain is Zinc finger CCCH-type with G patch domain-containing protein, found in Nematostella vectensis (Starlet sea anemone).